Here is a 577-residue protein sequence, read N- to C-terminus: MALQLLLAVFSCVLLLPQPAFGITRHYTLEIKMQNVTRLCHTKSLVSVNGQFPGPKLIAREGDQVLIKVVNQVPNNISLHWHGIRQLRSGWADGPAYITQCPIQTGQSYVYNYTIVGQRGTLWYHAHISWLRSTVYGPLIILPKRGVPYPFAKPHKEVPMIFGEWFNADTEAIIRQATQTGGGPNVSDAYTINGLPGPLYNCSAKDTFRLRVKPGKTYLLRLINAALNDELFFSIANHTVTVVEADAIYVKPFETETILIAPGQTTNVLLKTKSSYPSASFFMTARPYVTGQGTFDNSTVAGILEYEPPKQTKGAHSRTSIKNLQLFKPILPALNDTNFATKFSNKLRSLNSKNFPANVPLNVDRKFFFTVGLGTNPCNHKNNQTCQGPTNTTMFAASISNISFTMPTKALLQSHYSGQSHGVYSPKFPWSPIVPFNYTGTPPNNTMVSNGTNLMVLPYNTSVELVMQDTSILGAESHPLHLHGFNFFVVGQGFGNFDPNKDPRNFNLVDPIERNTVGVPSGGWAAIRFLADNPGVWFMHCHLEVHTSWGLRMAWLVLDGDKPDQKLLPPPADLPKC.

The N-terminal stretch at 1-22 (MALQLLLAVFSCVLLLPQPAFG) is a signal peptide. 2 Plastocyanin-like domains span residues 30–146 (EIKM…PKRG) and 156–309 (KEVP…YEPP). N-linked (GlcNAc...) asparagine glycans are attached at residues Asn35 and Asn76. Cu cation-binding residues include His80 and His82. Residue Asn112 is glycosylated (N-linked (GlcNAc...) asparagine). Cu cation contacts are provided by His125 and His127. N-linked (GlcNAc...) asparagine glycosylation is found at Asn185, Asn201, Asn237, Asn297, Asn335, Asn383, Asn391, Asn401, Asn437, Asn444, Asn450, and Asn460. The region spanning 427 to 561 (KFPWSPIVPF…RMAWLVLDGD (135 aa)) is the Plastocyanin-like 3 domain. Residues His478, His481, His483, His540, Cys541, His542, and His546 each contribute to the Cu cation site.

This sequence belongs to the multicopper oxidase family. It depends on Cu cation as a cofactor. In terms of tissue distribution, ubiquitous with higher levels in the inflorescence stem.

It is found in the secreted. The protein resides in the extracellular space. Its subcellular location is the apoplast. It carries out the reaction 4 hydroquinone + O2 = 4 benzosemiquinone + 2 H2O. Lignin degradation and detoxification of lignin-derived products. The polypeptide is Laccase-17 (LAC17) (Arabidopsis thaliana (Mouse-ear cress)).